The chain runs to 325 residues: ATP synthase gamma chain (325 aa).

This sequence belongs to the ATPase gamma chain family. As to quaternary structure, F-type ATPases have 2 components, CF(1) - the catalytic core - and CF(0) - the membrane proton channel. CF(1) has five subunits: alpha(3), beta(3), gamma(1), delta(1), epsilon(1). CF(0) has three main subunits: a, b and c.

The protein localises to the cell membrane. Functionally, produces ATP from ADP in the presence of a proton gradient across the membrane. The gamma chain is believed to be important in regulating ATPase activity and the flow of protons through the CF(0) complex. This Corynebacterium glutamicum (strain ATCC 13032 / DSM 20300 / JCM 1318 / BCRC 11384 / CCUG 27702 / LMG 3730 / NBRC 12168 / NCIMB 10025 / NRRL B-2784 / 534) protein is ATP synthase gamma chain.